A 363-amino-acid polypeptide reads, in one-letter code: MRPPIHKLICKRLADQSSHHSQHLYHQYIVRNLPAVLQMWRIPTDVPQVAVPIGLKLAEVTADTPLDEVFKHWKESGGVILKNILTPAEAHQITTELESRIDSVQRGSRVPHEDLAAFHGAKTKRAGDLINHSATFRERILENDFIHAICQRCFGEDGHNGDYWLSAATTLNASGPQPAQVLHRDLTSYPPYALLGPEGTEPQINFLFAFSDFTDDNGATRIIPGSNKWPFHQRGNMAQTIPAEMKTGDCLLIGGKVIHAMGENKTETERKCIQLTVIPSFLTPAEAHPFIIKLETVKKLSKRAQRFVGFRSQYPRGSPGLWTKDYIELALHLGLDDLQGAMEDLQHVLNQPKQWDTIDYDKM.

The Fe cation site is built by His183, Asp185, and His259.

It belongs to the PhyH family. As to quaternary structure, homodimer. It depends on Fe cation as a cofactor.

The enzyme catalyses sphingofungin B1 + 2-oxoglutarate + O2 = sphingofungin B + succinate + CO2. Its pathway is secondary metabolite biosynthesis. Functionally, dioxygenase; part of the gene cluster that mediates the biosynthesis of sphingofungins, bioactive molecules acting as sphingolipid inhibitors via inhibiting serine palmitoyl transferase (SPT). Within the pathway, sphC catalyzes the hydrolxylation at C-4 to convert sphingofungin B1 into sphingofungin B as well as presphingofungin into sphingofungin B2. Sphingofungin biosynthesis starts with the PKS sphB that produces an C18 polyketide precursor 3-hydroxyoctadeca-4,10-dienoyl-ACP containing one delta-6 desaturation and one delta-12 desaturation. The aminoacyl transferase sphA uses the sphB product to produce 3-keto-presphingofungin by adding an aminomalonate molecule. SphF then reduces the C-3 ketone of 3-keto-presphingofungin which leads to presphingofungin. The cytochrome P450 monooxygenase sphH converts presphingofungin into sphingofungin B1 which is further converted to sphingofungin B by the dioxygenase sphC. SphC is also able to convert presphingofungin into sphingofungin B2. The acetyltransferase sphE acetylates sphingofungin B to produce sphingofungin C, but can also convert sphingofungin B1 into sphingofungin C1 and sphingofungin B2 into sphingofungin C2. Finally, sphingofungin C can be spontaneously converted into sphingofungin D. The sequence is that of Dioxygenase sphC from Aspergillus fumigatus (strain CBS 144.89 / FGSC A1163 / CEA10) (Neosartorya fumigata).